We begin with the raw amino-acid sequence, 207 residues long: Outer-membrane lipoprotein LolB (207 aa).

A signal peptide spans 1–21 (MPLPDFRLIRLLPLAALVLTA). Cysteine 22 carries N-palmitoyl cysteine lipidation. Residue cysteine 22 is the site of S-diacylglycerol cysteine attachment.

The protein belongs to the LolB family. Monomer.

Its subcellular location is the cell outer membrane. In terms of biological role, plays a critical role in the incorporation of lipoproteins in the outer membrane after they are released by the LolA protein. The protein is Outer-membrane lipoprotein LolB of Escherichia coli (strain SMS-3-5 / SECEC).